Here is a 706-residue protein sequence, read N- to C-terminus: Protein-glutamine gamma-glutamyltransferase 6 (706 aa).

Ca(2+) is bound by residues A223, N226, and N228. C274 is an active-site residue. Residues D303, D305, N307, S309, and D327 each contribute to the Ca(2+) site. Residues H333 and D356 contribute to the active site. Ca(2+) contacts are provided by N396, T417, E445, and E450.

This sequence belongs to the transglutaminase superfamily. Transglutaminase family. Ca(2+) serves as cofactor.

The protein resides in the cytoplasm. It carries out the reaction L-glutaminyl-[protein] + L-lysyl-[protein] = [protein]-L-lysyl-N(6)-5-L-glutamyl-[protein] + NH4(+). Its function is as follows. Catalyzes the cross-linking of proteins and the conjugation of polyamines to proteins. This is Protein-glutamine gamma-glutamyltransferase 6 (TGM6) from Homo sapiens (Human).